Reading from the N-terminus, the 557-residue chain is TNF receptor-associated factor 5 (557 aa).

The segment at 45–85 adopts an RING-type zinc-finger fold; sequence CAFCHSVLHNPHQTGCGHRFCQHCILSLRELNTVPICPVDK. TRAF-type zinc fingers lie at residues 127–181 and 182–239; these read DHLQ…INLQ and NHEE…RNLQ. Positions 237–342 form a coiled coil; sequence NLQQHEHSAL…VNQQQNKFDL (106 aa). Lys318 participates in a covalent cross-link: Glycyl lysine isopeptide (Lys-Gly) (interchain with G-Cter in ubiquitin). An interaction with EIF2AK2/PKR region spans residues 345–557; sequence LMEAVDTVKQ…AVDLTDLEDL (213 aa). The MATH domain occupies 403–549; the sequence is NGKLIWKVTD…DDTLFLKVAV (147 aa).

Belongs to the TNF receptor-associated factor family. A subfamily. Homotrimer. Heteromer with TRAF3. Associates with TNFRSF5/CD40 through interaction with TRAF3. Associates with LTBR/TNFRSF3, TNFRSF4, TNFRSF8/CD30, TNFRSF11A/RANK, TNFRSF13B/TACI, TNFRSF14, TNFRSF17, TNFRSF19/TROY, RIPK2, MAP3K14, MAP3K5, and TRAF and TNF receptor associated protein TDP2. Interacts (via C-terminus) with EIF2AK2/PKR (via the kinase catalytic domain). Ubiquitinated at Lys-318 by the SCF(FBXL2) complex, leading to its degradation by the proteasome. In terms of tissue distribution, expressed in spleen, thymus, prostate, testis, ovary, small intestine, colon, and peripheral blood.

It localises to the cytoplasm. Its subcellular location is the cytosol. Its function is as follows. Adapter protein and signal transducer that links members of the tumor necrosis factor receptor family to different signaling pathways by association with the receptor cytoplasmic domain and kinases. Mediates activation of NF-kappa-B and probably JNK. Seems to be involved in apoptosis. Plays a role in mediating activation of NF-kappa-B by EIF2AK2/PKR. This Homo sapiens (Human) protein is TNF receptor-associated factor 5 (TRAF5).